The primary structure comprises 202 residues: GTP cyclohydrolase 1 (202 aa).

Zn(2+) is bound by residues Cys90, His93, and Cys163.

The protein belongs to the GTP cyclohydrolase I family. In terms of assembly, toroid-shaped homodecamer, composed of two pentamers of five dimers.

It catalyses the reaction GTP + H2O = 7,8-dihydroneopterin 3'-triphosphate + formate + H(+). It participates in cofactor biosynthesis; 7,8-dihydroneopterin triphosphate biosynthesis; 7,8-dihydroneopterin triphosphate from GTP: step 1/1. This chain is GTP cyclohydrolase 1 (folE), found in Mycobacterium bovis (strain ATCC BAA-935 / AF2122/97).